A 399-amino-acid chain; its full sequence is S-adenosylmethionine synthase (399 aa).

Residue His15 participates in ATP binding. Position 17 (Asp17) interacts with Mg(2+). Glu43 is a K(+) binding site. The L-methionine site is built by Glu56 and Gln99. Residues Gln99 to Arg109 are flexible loop. Residues Asp166–Lys168, Arg232–Phe233, Asp241, Arg247–Lys248, Ala264, and Lys268 contribute to the ATP site. Asp241 lines the L-methionine pocket. Lys272 is an L-methionine binding site.

This sequence belongs to the AdoMet synthase family. As to quaternary structure, homotetramer; dimer of dimers. The cofactor is Mg(2+). K(+) serves as cofactor.

The protein resides in the cytoplasm. It catalyses the reaction L-methionine + ATP + H2O = S-adenosyl-L-methionine + phosphate + diphosphate. It functions in the pathway amino-acid biosynthesis; S-adenosyl-L-methionine biosynthesis; S-adenosyl-L-methionine from L-methionine: step 1/1. Catalyzes the formation of S-adenosylmethionine (AdoMet) from methionine and ATP. The overall synthetic reaction is composed of two sequential steps, AdoMet formation and the subsequent tripolyphosphate hydrolysis which occurs prior to release of AdoMet from the enzyme. This is S-adenosylmethionine synthase from Nitrosospira multiformis (strain ATCC 25196 / NCIMB 11849 / C 71).